A 239-amino-acid polypeptide reads, in one-letter code: Ribonuclease 3 (239 aa).

The RNase III domain maps to 12-137 (ISRLEALIGY…LIATLYLDGG (126 aa)). Mg(2+) is bound at residue E50. D54 is a catalytic residue. The Mg(2+) site is built by D123 and E126. E126 is an active-site residue. The region spanning 162-231 (DAKTELQEWA…ATRLLEREGV (70 aa)) is the DRBM domain.

This sequence belongs to the ribonuclease III family. In terms of assembly, homodimer. The cofactor is Mg(2+).

The protein localises to the cytoplasm. It carries out the reaction Endonucleolytic cleavage to 5'-phosphomonoester.. Its function is as follows. Digests double-stranded RNA. Involved in the processing of primary rRNA transcript to yield the immediate precursors to the large and small rRNAs (23S and 16S). Processes some mRNAs, and tRNAs when they are encoded in the rRNA operon. Processes pre-crRNA and tracrRNA of type II CRISPR loci if present in the organism. In Agrobacterium fabrum (strain C58 / ATCC 33970) (Agrobacterium tumefaciens (strain C58)), this protein is Ribonuclease 3.